An 80-amino-acid polypeptide reads, in one-letter code: Peroxidase (80 aa).

The tract at residues 56–80 (DANEAEANSDLPGFNSSRSELEAAF) is disordered. Residue proline 67 participates in substrate binding. Asparagine 70 carries an N-linked (GlcNAc...) asparagine glycan.

It belongs to the peroxidase family. Classical plant (class III) peroxidase subfamily. The cofactor is Ca(2+). Heme b serves as cofactor.

It carries out the reaction 2 a phenolic donor + H2O2 = 2 a phenolic radical donor + 2 H2O. In terms of biological role, removal of H(2)O(2), oxidation of toxic reductants, biosynthesis and degradation of lignin, suberization, auxin catabolism, response to environmental stresses such as wounding, pathogen attack and oxidative stress. These functions might be dependent on each isozyme/isoform in each plant tissue. The chain is Peroxidase from Triticum aestivum (Wheat).